A 292-amino-acid polypeptide reads, in one-letter code: MKLHFTKMHGAGNDFVVLDGIATPIDFTPEQWRAIADRHFGVGADQLLLVERSTRPDVDFRYRIFNHDGGEVEQCGNGARCFVKFVTDRGLTDKRTIRVEVMNGISTLTMQPDGQVTVDMGAPVFEAARLPFVPDALPTRVEGRDTQHALQINGRTAWLSTVSMGNPHAVQVVDDAEAFPVREDGPLIESHAVFPRRVNAGFMEIADRHAIRLRVYERGAGETLACGTGACAAAVAGIRRGLLDSPVKVTTHGGDLTIAWAGEGEPVMMTGPATTVFEGTLDLDALKQTAAH.

The substrate site is built by asparagine 13, glutamine 46, and asparagine 66. Residue cysteine 75 is the Proton donor of the active site. Substrate contacts are provided by residues 76 to 77 (GN), asparagine 166, asparagine 199, and 217 to 218 (ER). The active-site Proton acceptor is cysteine 226. A substrate-binding site is contributed by 227 to 228 (GT).

The protein belongs to the diaminopimelate epimerase family. As to quaternary structure, homodimer.

Its subcellular location is the cytoplasm. The enzyme catalyses (2S,6S)-2,6-diaminopimelate = meso-2,6-diaminopimelate. Its pathway is amino-acid biosynthesis; L-lysine biosynthesis via DAP pathway; DL-2,6-diaminopimelate from LL-2,6-diaminopimelate: step 1/1. Its function is as follows. Catalyzes the stereoinversion of LL-2,6-diaminopimelate (L,L-DAP) to meso-diaminopimelate (meso-DAP), a precursor of L-lysine and an essential component of the bacterial peptidoglycan. The sequence is that of Diaminopimelate epimerase from Ralstonia nicotianae (strain ATCC BAA-1114 / GMI1000) (Ralstonia solanacearum).